Here is a 177-residue protein sequence, read N- to C-terminus: Large ribosomal subunit protein uL6 (177 aa).

Belongs to the universal ribosomal protein uL6 family. Part of the 50S ribosomal subunit.

In terms of biological role, this protein binds to the 23S rRNA, and is important in its secondary structure. It is located near the subunit interface in the base of the L7/L12 stalk, and near the tRNA binding site of the peptidyltransferase center. This Laribacter hongkongensis (strain HLHK9) protein is Large ribosomal subunit protein uL6.